A 458-amino-acid chain; its full sequence is Ribulose bisphosphate carboxylase (458 aa).

Asparagine 111 contacts substrate. Catalysis depends on lysine 166, which acts as the Proton acceptor. Lysine 168 contacts substrate. Mg(2+)-binding residues include lysine 191, aspartate 193, and glutamate 194. The residue at position 191 (lysine 191) is an N6-carboxylysine. The active-site Proton acceptor is histidine 287. Residues arginine 288, histidine 321, and serine 368 each contribute to the substrate site.

Belongs to the RuBisCO large chain family. Type II subfamily. As to quaternary structure, homodimer. It depends on Mg(2+) as a cofactor.

The catalysed reaction is 2 (2R)-3-phosphoglycerate + 2 H(+) = D-ribulose 1,5-bisphosphate + CO2 + H2O. It catalyses the reaction D-ribulose 1,5-bisphosphate + O2 = 2-phosphoglycolate + (2R)-3-phosphoglycerate + 2 H(+). RuBisCO catalyzes two reactions: the carboxylation of D-ribulose 1,5-bisphosphate, the primary event in carbon dioxide fixation, as well as the oxidative fragmentation of the pentose substrate. Both reactions occur simultaneously and in competition at the same active site. This Rhodobacter capsulatus (strain ATCC BAA-309 / NBRC 16581 / SB1003) protein is Ribulose bisphosphate carboxylase (cbbM).